Here is a 193-residue protein sequence, read N- to C-terminus: dCTP deaminase (193 aa).

DCTP-binding positions include 110-115 (RSSLAR), Asp-128, 136-138 (VLE), Tyr-171, Lys-178, and Gln-182. The active-site Proton donor/acceptor is Glu-138.

Belongs to the dCTP deaminase family. In terms of assembly, homotrimer.

It carries out the reaction dCTP + H2O + H(+) = dUTP + NH4(+). It participates in pyrimidine metabolism; dUMP biosynthesis; dUMP from dCTP (dUTP route): step 1/2. Catalyzes the deamination of dCTP to dUTP. The protein is dCTP deaminase of Tolumonas auensis (strain DSM 9187 / NBRC 110442 / TA 4).